Reading from the N-terminus, the 104-residue chain is Large ribosomal subunit protein uL24 (104 aa).

Belongs to the universal ribosomal protein uL24 family. As to quaternary structure, part of the 50S ribosomal subunit.

One of two assembly initiator proteins, it binds directly to the 5'-end of the 23S rRNA, where it nucleates assembly of the 50S subunit. In terms of biological role, one of the proteins that surrounds the polypeptide exit tunnel on the outside of the subunit. The chain is Large ribosomal subunit protein uL24 from Clostridium perfringens (strain SM101 / Type A).